A 94-amino-acid polypeptide reads, in one-letter code: Co-chaperonin GroES (94 aa).

It belongs to the GroES chaperonin family. As to quaternary structure, heptamer of 7 subunits arranged in a ring. Interacts with the chaperonin GroEL.

Its subcellular location is the cytoplasm. In terms of biological role, together with the chaperonin GroEL, plays an essential role in assisting protein folding. The GroEL-GroES system forms a nano-cage that allows encapsulation of the non-native substrate proteins and provides a physical environment optimized to promote and accelerate protein folding. GroES binds to the apical surface of the GroEL ring, thereby capping the opening of the GroEL channel. This is Co-chaperonin GroES from Ehrlichia canis (strain Jake).